The chain runs to 173 residues: NADH-ubiquinone oxidoreductase chain 6 (173 aa).

Transmembrane regions (helical) follow at residues 1–21, 27–47, 48–68, 87–107, 113–133, and 139–159; these read MTYFVLFLGLCFVLGGLAVAS, YGVVGLVLASIAGCGWLLSLG, VSFVSLVLFMVYLGGMLVVFV, VVGYGVSLITVLVVGVVVGGF, FGVITVDSVGMFSVRLDFGGV, and CGVGMFLVAGWGLLLTLFVVL.

Belongs to the complex I subunit 6 family.

It localises to the mitochondrion membrane. It catalyses the reaction a ubiquinone + NADH + 5 H(+)(in) = a ubiquinol + NAD(+) + 4 H(+)(out). Functionally, core subunit of the mitochondrial membrane respiratory chain NADH dehydrogenase (Complex I) that is believed to belong to the minimal assembly required for catalysis. Complex I functions in the transfer of electrons from NADH to the respiratory chain. The immediate electron acceptor for the enzyme is believed to be ubiquinone. This Alle alle (Dovekie) protein is NADH-ubiquinone oxidoreductase chain 6 (MT-ND6).